The primary structure comprises 438 residues: Proline--tRNA ligase (438 aa).

This sequence belongs to the class-II aminoacyl-tRNA synthetase family. ProS type 2 subfamily. In terms of assembly, homodimer.

It is found in the cytoplasm. It carries out the reaction tRNA(Pro) + L-proline + ATP = L-prolyl-tRNA(Pro) + AMP + diphosphate. Functionally, catalyzes the attachment of proline to tRNA(Pro) in a two-step reaction: proline is first activated by ATP to form Pro-AMP and then transferred to the acceptor end of tRNA(Pro). The chain is Proline--tRNA ligase from Rhodopseudomonas palustris (strain TIE-1).